The chain runs to 1717 residues: DNA-directed RNA polymerase I subunit RPA1 (1717 aa).

Positions 64, 67, 74, 77, 104, and 107 each coordinate Zn(2+). Residues 110-201 are clamp; the sequence is LTCPRAAIYL…VAQFWKTHMA (92 aa). Zn(2+) contacts are provided by Cys-205 and Cys-208. The clamp stretch occupies residues 327 to 433; that stretch reads FTNGQTVNLQ…IRQILEKKEG (107 aa). Residues 410 to 423 form a rudder region; the sequence is DSEMDKLMLEKYPG. Lys-431, Arg-436, and Arg-443 together coordinate DNA. The interval 475–549 is involved in RRN3 binding to Pol I complex; the sequence is YPQPVTPWNV…QGTKVVCRHV (75 aa). Arg-559 provides a ligand contact to RNA. Mg(2+)-binding residues include Asp-595, Asp-597, and Asp-599. Asp-599 is a binding site for RNA. Residues 812-890 are funnel; the sequence is KPNADVVRQR…NEINKACMPL (79 aa). The interval 967-1008 is bridging helix; that stretch reads RPPEFFFHCMAGREGLVDTAVKTSRSGYLQRCIIKHLEGLVI. The tract at residues 1067-1162 is mediates the interaction with TOP2A; it reads ADPQKVLGHI…SLSVWRPDIY (96 aa). The trigger loop stretch occupies residues 1214–1255; the sequence is PGEAVGLLAAQSIGEPSTQMTLNTFHFAGRGEMNVTLGIPRL. Arg-1256 contributes to the DNA binding site. The interval 1372 to 1493 is disordered; sequence RNVNSRRATQ…RRHSRPQGAE (122 aa). Over residues 1380 to 1397 the composition is skewed to basic and acidic residues; it reads TQKDLNDTEDSGRSQREE. Residue Ser-1393 is modified to Phosphoserine. Composition is skewed to acidic residues over residues 1398–1419 and 1429–1450; these read ERDE…DADA and EEEV…EVQE. Positions 1452-1464 are enriched in basic and acidic residues; that stretch reads GNIKGDGVHQGHE. Acidic residues predominate over residues 1465–1477; the sequence is PDEEEHLGLEEEE.

Belongs to the RNA polymerase beta' chain family. In terms of assembly, component of the RNA polymerase I (Pol I) complex consisting of 13 subunits: a ten-subunit catalytic core composed of POLR1A/RPA1, POLR1B/RPA2, POLR1C/RPAC1, POLR1D/RPAC2, POLR1H/RPA12, POLR2E/RPABC1, POLR2F/RPABC2, POLR2H/RPABC3, POLR2K/RPABC4 and POLR2L/RPABC5; a mobile stalk subunit POLR1F/RPA43 protruding from the core and additional subunits homologous to general transcription factors POLR1E/RPA49 and POLR1G/RPA34. Part of Pol I pre-initiation complex (PIC), in which Pol I core assembles with RRN3 and promoter-bound UTBF and SL1/TIF-IB complex. Interacts (via dock II domain) with TOP2A; this interaction may assist Pol I transcription initiation by releasing supercoils occurring during DNA unwinding. Interacts with CAVIN1; this interaction induces the dissociation of Pol I complex paused at rDNA terminator sequences. Interacts with MYO1C. Interacts with ERBB2. Interacts with DDX11. Interacts with RECQL5. Mg(2+) is required as a cofactor. Post-translationally, phosphorylated.

The protein resides in the nucleus. The protein localises to the nucleolus. Its subcellular location is the chromosome. It catalyses the reaction RNA(n) + a ribonucleoside 5'-triphosphate = RNA(n+1) + diphosphate. Its function is as follows. Catalytic core component of RNA polymerase I (Pol I), a DNA-dependent RNA polymerase which synthesizes ribosomal RNA precursors using the four ribonucleoside triphosphates as substrates. Transcribes 47S pre-rRNAs from multicopy rRNA gene clusters, giving rise to 5.8S, 18S and 28S ribosomal RNAs. Pol I-mediated transcription cycle proceeds through transcription initiation, transcription elongation and transcription termination stages. During transcription initiation, Pol I pre-initiation complex (PIC) is recruited by the selectivity factor 1 (SL1/TIF-IB) complex bound to the core promoter that precedes an rDNA repeat unit. The PIC assembly bends the promoter favoring the formation of the transcription bubble and promoter escape. Once the polymerase has escaped from the promoter it enters the elongation phase during which RNA is actively polymerized, based on complementarity with the template DNA strand. Highly processive, assembles in structures referred to as 'Miller trees' where many elongating Pol I complexes queue and transcribe the same rDNA coding regions. At terminator sequences downstream of the rDNA gene, PTRF interacts with Pol I and halts Pol I transcription leading to the release of the RNA transcript and polymerase from the DNA. Forms Pol I active center together with the second largest subunit POLR1B/RPA2. Appends one nucleotide at a time to the 3' end of the nascent RNA, with POLR1A/RPA1 contributing a Mg(2+)-coordinating DxDGD motif, and POLR1B/RPA2 participating in the coordination of a second Mg(2+) ion and providing lysine residues believed to facilitate Watson-Crick base pairing between the incoming nucleotide and the template base. Typically, Mg(2+) ions direct a 5' nucleoside triphosphate to form a phosphodiester bond with the 3' hydroxyl of the preceding nucleotide of the nascent RNA, with the elimination of pyrophosphate. Has proofreading activity: Pauses and backtracks to allow the cleavage of a missincorporated nucleotide via POLR1H/RPA12. High Pol I processivity is associated with decreased transcription fidelity. In Mus musculus (Mouse), this protein is DNA-directed RNA polymerase I subunit RPA1.